Here is a 222-residue protein sequence, read N- to C-terminus: uncharacterized protein (222 aa).

A lipid anchor (N-myristoyl glycine; by host) is attached at G2.

This sequence belongs to the mimivirus R683/R861 family.

This is an uncharacterized protein from Acanthamoeba polyphaga mimivirus (APMV).